The sequence spans 712 residues: DNA ligase (712 aa).

The segment covering 1 to 22 (MSTQYDSDSSPAASNSGSADPA) has biased composition (low complexity). Residues 1–23 (MSTQYDSDSSPAASNSGSADPAL) are disordered. 53 to 57 (DAEFD) lines the NAD(+) pocket. The tract at residues 69 to 93 (SHPEAVTGPSPTTEVAPSPPESSPF) is disordered. NAD(+)-binding positions include 104-105 (SL) and Glu129. The active-site N6-AMP-lysine intermediate is Lys131. Positions 152, 192, 308, and 332 each coordinate NAD(+). Residues Cys426, Cys429, Cys445, and Cys451 each contribute to the Zn(2+) site. The BRCT domain maps to 624 to 712 (IQADLLAGLS…GPGKGDAEED (89 aa)).

Belongs to the NAD-dependent DNA ligase family. LigA subfamily. It depends on Mg(2+) as a cofactor. Requires Mn(2+) as cofactor.

It carries out the reaction NAD(+) + (deoxyribonucleotide)n-3'-hydroxyl + 5'-phospho-(deoxyribonucleotide)m = (deoxyribonucleotide)n+m + AMP + beta-nicotinamide D-nucleotide.. Its function is as follows. DNA ligase that catalyzes the formation of phosphodiester linkages between 5'-phosphoryl and 3'-hydroxyl groups in double-stranded DNA using NAD as a coenzyme and as the energy source for the reaction. It is essential for DNA replication and repair of damaged DNA. The protein is DNA ligase of Corynebacterium urealyticum (strain ATCC 43042 / DSM 7109).